Here is a 395-residue protein sequence, read N- to C-terminus: ATP phosphoribosyltransferase regulatory subunit (395 aa).

This sequence belongs to the class-II aminoacyl-tRNA synthetase family. HisZ subfamily. Heteromultimer composed of HisG and HisZ subunits.

It localises to the cytoplasm. It participates in amino-acid biosynthesis; L-histidine biosynthesis; L-histidine from 5-phospho-alpha-D-ribose 1-diphosphate: step 1/9. Functionally, required for the first step of histidine biosynthesis. May allow the feedback regulation of ATP phosphoribosyltransferase activity by histidine. The polypeptide is ATP phosphoribosyltransferase regulatory subunit (Stutzerimonas stutzeri (Pseudomonas stutzeri)).